A 351-amino-acid polypeptide reads, in one-letter code: Dihydroorotate dehydrogenase (quinone) (351 aa).

Residues 67–71 (AGFDK) and threonine 91 contribute to the FMN site. Lysine 71 is a binding site for substrate. Substrate is bound at residue 116–120 (NAMGF). Residues asparagine 145 and asparagine 178 each contribute to the FMN site. Asparagine 178 serves as a coordination point for substrate. The active-site Nucleophile is serine 181. Asparagine 183 provides a ligand contact to substrate. FMN-binding residues include lysine 214 and threonine 242. 243–244 (NT) contacts substrate. Residues glycine 262, glycine 291, and 312–313 (YS) contribute to the FMN site.

It belongs to the dihydroorotate dehydrogenase family. Type 2 subfamily. Monomer. The cofactor is FMN.

The protein resides in the cell membrane. It catalyses the reaction (S)-dihydroorotate + a quinone = orotate + a quinol. The protein operates within pyrimidine metabolism; UMP biosynthesis via de novo pathway; orotate from (S)-dihydroorotate (quinone route): step 1/1. Functionally, catalyzes the conversion of dihydroorotate to orotate with quinone as electron acceptor. This is Dihydroorotate dehydrogenase (quinone) from Helicobacter pylori (strain Shi470).